Here is a 409-residue protein sequence, read N- to C-terminus: Phosphopentomutase (409 aa).

Positions 10, 302, 307, 343, 344, and 355 each coordinate Mn(2+).

Belongs to the phosphopentomutase family. Requires Mn(2+) as cofactor.

The protein localises to the cytoplasm. The catalysed reaction is 2-deoxy-alpha-D-ribose 1-phosphate = 2-deoxy-D-ribose 5-phosphate. The enzyme catalyses alpha-D-ribose 1-phosphate = D-ribose 5-phosphate. It participates in carbohydrate degradation; 2-deoxy-D-ribose 1-phosphate degradation; D-glyceraldehyde 3-phosphate and acetaldehyde from 2-deoxy-alpha-D-ribose 1-phosphate: step 1/2. In terms of biological role, isomerase that catalyzes the conversion of deoxy-ribose 1-phosphate (dRib-1-P) and ribose 1-phosphate (Rib-1-P) to deoxy-ribose 5-phosphate (dRib-5-P) and ribose 5-phosphate (Rib-5-P), respectively. In Chelativorans sp. (strain BNC1), this protein is Phosphopentomutase.